A 266-amino-acid chain; its full sequence is Glucosamine-6-phosphate deaminase (266 aa).

Catalysis depends on Asp72, which acts as the Proton acceptor; for enolization step. Asp141 acts as the For ring-opening step in catalysis. The Proton acceptor; for ring-opening step role is filled by His143. Glu148 functions as the For ring-opening step in the catalytic mechanism.

Belongs to the glucosamine/galactosamine-6-phosphate isomerase family. NagB subfamily. In terms of assembly, homohexamer.

The catalysed reaction is alpha-D-glucosamine 6-phosphate + H2O = beta-D-fructose 6-phosphate + NH4(+). It functions in the pathway amino-sugar metabolism; N-acetylneuraminate degradation; D-fructose 6-phosphate from N-acetylneuraminate: step 5/5. With respect to regulation, allosterically activated by N-acetylglucosamine 6-phosphate (GlcNAc6P). Its function is as follows. Catalyzes the reversible isomerization-deamination of glucosamine 6-phosphate (GlcN6P) to form fructose 6-phosphate (Fru6P) and ammonium ion. This chain is Glucosamine-6-phosphate deaminase, found in Pectobacterium atrosepticum (strain SCRI 1043 / ATCC BAA-672) (Erwinia carotovora subsp. atroseptica).